An 820-amino-acid chain; its full sequence is G-type lectin S-receptor-like serine/threonine-protein kinase At1g11280 (820 aa).

An N-terminal signal peptide occupies residues 1–28 (MGIHLGEIGIVLFPWFLWLSLFLSCGYA). Residues 29-148 (AITISSPLTL…VSENLLWQSF (120 aa)) enclose the Bulb-type lectin domain. Over 29-434 (AITISSPLTL…SELAGSRRTK (406 aa)) the chain is Extracellular. N-linked (GlcNAc...) asparagine glycosylation is found at asparagine 57, asparagine 92, asparagine 98, asparagine 241, and asparagine 272. Positions 283 to 319 (PANLCDLYGACGPFGLCVTSNPTKCKCMKGFVPKYKE) constitute an EGF-like domain. 2 disulfides stabilise this stretch: cysteine 287–cysteine 299 and cysteine 293–cysteine 307. N-linked (GlcNAc...) asparagine glycans are attached at residues asparagine 325, asparagine 341, and asparagine 384. In terms of domain architecture, PAN spans 338 to 422 (CQANLSTKTQ…VGGEFLSIRL (85 aa)). Intrachain disulfides connect cysteine 377–cysteine 398 and cysteine 381–cysteine 387. Residues 435-455 (IIVGSISLSIFVILAFGSYKY) traverse the membrane as a helical segment. At 456–820 (WRYRAKQNVG…HVTQTEIYGR (365 aa)) the chain is on the cytoplasmic side. The Protein kinase domain occupies 505–792 (FNVSNKLGQG…DLPRPKQPLF (288 aa)). ATP contacts are provided by residues 511–519 (LGQGGFGPV) and lysine 533. Phosphoserine is present on residues serine 539 and serine 554. The segment at 594–611 (TLKLQIDWPKRFNIIQGV) is caM-binding. Aspartate 630 acts as the Proton acceptor in catalysis. Serine 634 and serine 647 each carry phosphoserine. Threonine 664 is modified (phosphothreonine). A phosphoserine mark is found at serine 707, serine 708, and serine 808. Residue threonine 815 is modified to Phosphothreonine.

Belongs to the protein kinase superfamily. Ser/Thr protein kinase family.

Its subcellular location is the cell membrane. The catalysed reaction is L-seryl-[protein] + ATP = O-phospho-L-seryl-[protein] + ADP + H(+). It catalyses the reaction L-threonyl-[protein] + ATP = O-phospho-L-threonyl-[protein] + ADP + H(+). The chain is G-type lectin S-receptor-like serine/threonine-protein kinase At1g11280 from Arabidopsis thaliana (Mouse-ear cress).